The sequence spans 385 residues: dTDP-4-dehydro-2,3,6-trideoxy-D-glucose 4-aminotransferase (385 aa).

Lys-182 bears the N6-(pyridoxal phosphate)lysine mark.

Belongs to the DegT/DnrJ/EryC1 family. As to quaternary structure, homodimer. It depends on pyridoxal 5'-phosphate as a cofactor.

The enzyme catalyses dTDP-4-amino-2,3,4,6-tetradeoxy-alpha-D-erythro-hexopyranose + 2-oxoglutarate = dTDP-4-dehydro-2,3,6-trideoxy-alpha-D-hexopyranose + L-glutamate. Involved in the biosynthesis of forosamine ((4-dimethylamino)-2,3,4,6-tetradeoxy-alpha-D-threo-hexopyranose), a highly deoxygenated sugar component of several bioactive natural products such as the insecticidal spinosyns A and D. In the presence of pyridoxal 5'-phosphate (PLP) and alpha-ketoglutarate, catalyzes the C-4 transamination of dTDP-4-keto-2,3,6-trideoxy-alpha-D-glucose to yield dTDP-4-amino-2,3,4,6-tetradeoxy-alpha-D-glucose. It can also use pyruvate, but less efficiently than alpha-ketoglutarate. Also able to catalyze the C-4 transamination of dTDP-4-keto-2,6-dideoxy-alpha-D-glucose to yield dTDP-4-amino-2,4,6-trideoxy-D-glucose. This is dTDP-4-dehydro-2,3,6-trideoxy-D-glucose 4-aminotransferase from Saccharopolyspora spinosa.